We begin with the raw amino-acid sequence, 606 residues long: Zinc finger protein 214 (606 aa).

The KRAB domain occupies 3–83; the sequence is VTFEDVTIIF…GAQMYENQNY (81 aa). The C2H2-type 1; degenerate zinc finger occupies 275–297; it reads YGCDEVDGNFHQSSGVHFHQRVH. The C2H2-type 2 zinc-finger motif lies at 303–325; that stretch reads YSCNACGKSFSQISSLHNHQRVH. The segment at 330–352 adopts a C2H2-type 3; degenerate zinc-finger fold; that stretch reads FYKIECDKDLSRNSLLHIHQRLH. C2H2-type zinc fingers lie at residues 358 to 380, 386 to 408, 414 to 436, 442 to 464, 470 to 492, 498 to 520, 526 to 548, and 554 to 576; these read FKCN…QRVH, YKCD…QLVH, YKCE…QRVH, YKCD…QRVH, YTCP…QRVH, YKCH…QRVH, and YQCA…QRVH.

The protein belongs to the krueppel C2H2-type zinc-finger protein family.

Its subcellular location is the nucleus. May be involved in transcriptional regulation. The polypeptide is Zinc finger protein 214 (ZNF214) (Homo sapiens (Human)).